The sequence spans 953 residues: MNIRKPLCSNSVVGACTLISLTTAVILGHLMLRELMLLPQDLHESSSGLWKTYRPHHQEGYKPGPLHIQEQTEQPKEAPTQCDVPPSSRFDCAPDKGISQEQCEARGCCYVPAGQVLKEPQIGQPWCFFPPSYPSYRLENLSSTESGYTATLTRTSPTFFPKDVLTLQLEVLMETDSRLHFKIKDPASKRYEVPLETPRVLSQAPSPLYSVEFSEEPFGVIVRRKLGGRVLLNTTVAPLFFADQFLQLSTSLPSQHITGLGEHLSPLMLSTDWARITLWNRDTPPSQGTNLYGSHPFYLALEDGGLAHGVFLLNSNAMDVILQPSPALTWRSTGGILDVYVFLGPEPKSVVQQYLDVVGYPFMPPYWGLGFHLCRWGYSSTAIVRQVVENMTRTHFPLDVQWNDLDYMDARRDFTFNQDSFADFPDMVRELHQDGRRYMMIVDPAISSAGPAGSYRPYDEGLRRGVFITNETGQPLIGKVWPGTTAFPDFTNPETLDWWQDMVSEFHAQVPFDGMWLDMNEPSNFVRGSQQGCPNNELENPPYVPGVVGGILQAATICASSHQFLSTHYNLHNLYGLTEAIASSRALVKTRGTRPFVISRSTFSGHGRYAGHWTGDVRSSWEHLAYSVPDILQFNLLGVPLVGADICGFIGDTSEELCVRWTQLGAFYPFMRNHNDLNSVPQEPYRFSETAQQAMRKAFALRYALLPYLYTLFHRAHVRGDTVARPLFLEFPEDPSTWSVDRQLLWGPALLITPVLEPGKTEVTGYFPKGTWYNMQMVSVDSLGTLPSPSSASSFRSAVQSKGQWLTLEAPLDTINVHLREGYIIPLQGPSLTTTESRKQPMALAVALTASGEADGELFWDDGESLAVLERGAYTLVTFSAKNNTIVNKLVRVTKEGAELQLREVTVLGVATAPTQVLSNGIPVSNFTYSPDNKSLAIPVSLLMGELFQISWS.

The signal sequence occupies residues 1–27 (MNIRKPLCSNSVVGACTLISLTTAVIL). Positions 28 to 69 (GHLMLRELMLLPQDLHESSSGLWKTYRPHHQEGYKPGPLHIQ) are excised as a propeptide. The region spanning 80-131 (TQCDVPPSSRFDCAPDKGISQEQCEARGCCYVPAGQVLKEPQIGQPWCFFPP) is the P-type domain. Disulfide bonds link Cys-82–Cys-109, Cys-92–Cys-108, and Cys-103–Cys-127. 3 N-linked (GlcNAc...) asparagine glycosylation sites follow: Asn-140, Asn-233, and Asn-390. Asp-404 provides a ligand contact to substrate. An N-linked (GlcNAc...) asparagine glycan is attached at Asn-470. Residue Asp-518 is the Nucleophile of the active site. The active site involves Glu-521. Cys-533 and Cys-558 are oxidised to a cystine. Substrate-binding residues include Arg-600 and Asp-616. Cys-647 and Cys-658 are joined by a disulfide. Residue His-674 coordinates substrate. N-linked (GlcNAc...) asparagine glycans are attached at residues Asn-883, Asn-926, and Asn-933.

This sequence belongs to the glycosyl hydrolase 31 family.

It localises to the lysosome. The protein localises to the lysosome membrane. It catalyses the reaction Hydrolysis of terminal, non-reducing (1-&gt;4)-linked alpha-D-glucose residues with release of alpha-D-glucose.. Functionally, essential for the degradation of glycogen in lysosomes. Has highest activity on alpha-1,4-linked glycosidic linkages, but can also hydrolyze alpha-1,6-linked glucans. This Mus musculus (Mouse) protein is Lysosomal alpha-glucosidase (Gaa).